A 350-amino-acid polypeptide reads, in one-letter code: Ion-translocating oxidoreductase complex subunit D (350 aa).

5 consecutive transmembrane segments (helical) span residues Gln15 to Thr35, Trp36 to Ala56, Pro67 to Ser87, Leu88 to Ala108, and Pro122 to Leu142. Thr186 carries the post-translational modification FMN phosphoryl threonine. The next 4 helical transmembrane spans lie at Trp213–Leu233, Ile242–Pro262, Ala264–Ile284, and Leu299–Gly316.

Belongs to the NqrB/RnfD family. As to quaternary structure, the complex is composed of six subunits: RnfA, RnfB, RnfC, RnfD, RnfE and RnfG. FMN is required as a cofactor.

Its subcellular location is the cell inner membrane. Part of a membrane-bound complex that couples electron transfer with translocation of ions across the membrane. In Aeromonas salmonicida (strain A449), this protein is Ion-translocating oxidoreductase complex subunit D.